Consider the following 414-residue polypeptide: Esterase FrsA (414 aa).

The protein belongs to the FrsA family.

The enzyme catalyses a carboxylic ester + H2O = an alcohol + a carboxylate + H(+). Catalyzes the hydrolysis of esters. This Shigella boydii serotype 4 (strain Sb227) protein is Esterase FrsA.